The following is a 407-amino-acid chain: Glucose-1-phosphate adenylyltransferase 2 (407 aa).

Alpha-D-glucose 1-phosphate contacts are provided by residues Tyr97, Gly162, 177–178, and Ser195; that span reads EK.

Belongs to the bacterial/plant glucose-1-phosphate adenylyltransferase family. As to quaternary structure, homotetramer.

The catalysed reaction is alpha-D-glucose 1-phosphate + ATP + H(+) = ADP-alpha-D-glucose + diphosphate. It participates in glycan biosynthesis; glycogen biosynthesis. Involved in the biosynthesis of ADP-glucose, a building block required for the elongation reactions to produce glycogen. Catalyzes the reaction between ATP and alpha-D-glucose 1-phosphate (G1P) to produce pyrophosphate and ADP-Glc. This chain is Glucose-1-phosphate adenylyltransferase 2, found in Vibrio cholerae serotype O1 (strain ATCC 39315 / El Tor Inaba N16961).